Here is a 178-residue protein sequence, read N- to C-terminus: MSKSGTKITFYEDKHFQGRHYDCDCDCADFHMYLSRCNSIRVEGGTWAVYERPNFAGYMYILPRGEYPEYQHWMGLNDRLSSCRAVHLSSGGQYKIQIFEKGDFNGQMYETTEDCPSIMEQFHMREVHSSKVLDGVWIFYELPNYRGRQYLLDKKEYRKPIDWGAASPAVQSFRRIVE.

S2 is subject to N-acetylserine. The N-terminal arm stretch occupies residues 2–5 (SKSG). 2 Beta/gamma crystallin 'Greek key' domains span residues 6 to 44 (TKITFYEDKHFQGRHYDCDCDCADFHMYLSRCNSIRVEG) and 45 to 87 (GTWA…RAVH). The tract at residues 88–93 (LSSGGQ) is connecting peptide. 2 Beta/gamma crystallin 'Greek key' domains span residues 94 to 134 (YKIQ…KVLD) and 135 to 177 (GVWI…RRIV).

Belongs to the beta/gamma-crystallin family. In terms of assembly, monomer.

Crystallins are the dominant structural components of the vertebrate eye lens. This is Gamma-crystallin S (CRYGS) from Canis lupus familiaris (Dog).